The sequence spans 185 residues: MRNQKAERLVAAGLVLHIIQWIFILWAFLKVKHLFSDYTIYNPNVISGSMQSLSFIQMMRAMMYSGAIVNYVLFFALVLLIYGIVLHAILIVLEMAAYVMIRRNPSSSWGFFFIAAGVKLAILNITGIPFLAAGFLLMKQKKAENGVKAERKRKPRLRIRRQGRRLNRIRRKPSLPVEYQKEKTI.

The next 3 membrane-spanning stretches (helical) occupy residues 9 to 29 (LVAA…WAFL), 72 to 92 (VLFF…ILIV), and 111 to 131 (FFFI…IPFL).

The protein localises to the cell membrane. This is an uncharacterized protein from Bacillus subtilis (strain 168).